The chain runs to 310 residues: MKTLTRNILRTAITVILVILAFVAIFRAWVYYTASPWTRDARFSADIVAIAPDVSGLISQVNVKDNQLVKKDQVLFVIDQPRYQKALAEAEADVAYYQTLAQEKRVEAGRRNKLGIQAMSREEIDQANNVLQTVEHQLAKAVASRDLARLDLERTEIRAPADGWVTNLNVYTGEFITRGSTAVALVKENTFYVMAYLEETKLEGVRPGYRAEITPLGSSKTIKGTVDSIAAGVTNASSSSDSKGMASVDSNLEWVRLAQRVPVRIRLDQQQGNLWPSGTTATVVITGKEDRDTSRANFFQKLAMRLREFG.

A helical membrane pass occupies residues 12 to 32; it reads AITVILVILAFVAIFRAWVYY.

Belongs to the membrane fusion protein (MFP) (TC 8.A.1) family.

Its subcellular location is the cell inner membrane. In terms of biological role, forms an efflux pump with AaeB. The chain is p-hydroxybenzoic acid efflux pump subunit AaeA from Klebsiella pneumoniae (strain 342).